A 99-amino-acid chain; its full sequence is Large ribosomal subunit protein bL21 (99 aa).

The protein belongs to the bacterial ribosomal protein bL21 family. Part of the 50S ribosomal subunit. Contacts protein L20.

In terms of biological role, this protein binds to 23S rRNA in the presence of protein L20. This Mycoplasmopsis pulmonis (strain UAB CTIP) (Mycoplasma pulmonis) protein is Large ribosomal subunit protein bL21.